Here is a 446-residue protein sequence, read N- to C-terminus: WD repeat domain phosphoinositide-interacting protein 1 (446 aa).

WD repeat units follow at residues 3–42 (AEAA…LFSL), 47–88 (QLDQ…VYHF), 92–126 (TEIC…IHNI), 131–173 (LLKT…LYDG), 177–216 (KTVC…VFSV), 222–261 (LYEF…IFKL), and 304–343 (FATA…MYNL). Residues 131-136 (LLKTLL) carry the Nuclear receptor interaction motif. Residues 225–228 (FRRG) carry the L/FRRG motif motif. Residues 386-406 (ARPSASSASTVPGYSEDGGAL) form a disordered region.

This sequence belongs to the WD repeat PROPPIN family. As to quaternary structure, interacts with androgen receptor (AR) and the estrogen receptors ESR1 and ESR2. Interacts with WIPI2. Interacts with WDR45. Interacts with ATG16L1. May interact with NUDC. In terms of tissue distribution, ubiquitously expressed. Highly expressed in skeletal muscle, heart, testis, pancreas and placenta. Highly expressed in G361, Sk-mel-28, Sk-mel-13, WM852 and WM451 cells. Up-regulated in a variety of tumor tissues.

The protein resides in the golgi apparatus. It is found in the trans-Golgi network. The protein localises to the endosome. Its subcellular location is the cytoplasmic vesicle. It localises to the clathrin-coated vesicle. The protein resides in the preautophagosomal structure membrane. It is found in the cytoplasm. The protein localises to the cytoskeleton. Component of the autophagy machinery that controls the major intracellular degradation process by which cytoplasmic materials are packaged into autophagosomes and delivered to lysosomes for degradation. Plays an important role in starvation- and calcium-mediated autophagy, as well as in mitophagy. Functions downstream of the ULK1 and PI3-kinases that produce phosphatidylinositol 3-phosphate (PtdIns3P) on membranes of the endoplasmic reticulum once activated. Binds phosphatidylinositol 3-phosphate (PtdIns3P), and maybe other phosphoinositides including PtdIns3,5P2 and PtdIns5P, and is recruited to phagophore assembly sites at the endoplasmic reticulum membranes. There, it assists WIPI2 in the recruitment of ATG12-ATG5-ATG16L1, a complex that directly controls the elongation of the nascent autophagosomal membrane. Together with WDR45/WIPI4, promotes ATG2 (ATG2A or ATG2B)-mediated lipid transfer by enhancing ATG2-association with phosphatidylinositol 3-monophosphate (PI3P)-containing membranes. Involved in xenophagy of Staphylococcus aureus. Invading S.aureus cells become entrapped in autophagosome-like WIPI1 positive vesicles targeted for lysosomal degradation. Also plays a distinct role in controlling the transcription of melanogenic enzymes and melanosome maturation, a process that is distinct from starvation-induced autophagy. May also regulate the trafficking of proteins involved in the mannose-6-phosphate receptor (MPR) recycling pathway. This Homo sapiens (Human) protein is WD repeat domain phosphoinositide-interacting protein 1 (WIPI1).